Reading from the N-terminus, the 572-residue chain is Arginine--tRNA ligase (572 aa).

A 'HIGH' region motif is present at residues 122-132; that stretch reads PNLAKEMHVGH.

The protein belongs to the class-I aminoacyl-tRNA synthetase family. In terms of assembly, monomer.

Its subcellular location is the cytoplasm. The catalysed reaction is tRNA(Arg) + L-arginine + ATP = L-arginyl-tRNA(Arg) + AMP + diphosphate. This is Arginine--tRNA ligase from Neisseria meningitidis serogroup B (strain ATCC BAA-335 / MC58).